Reading from the N-terminus, the 139-residue chain is Small ribosomal subunit protein uS19 (139 aa).

The protein belongs to the universal ribosomal protein uS19 family.

In terms of biological role, protein S19 forms a complex with S13 that binds strongly to the 16S ribosomal RNA. The polypeptide is Small ribosomal subunit protein uS19 (Methanoregula boonei (strain DSM 21154 / JCM 14090 / 6A8)).